The chain runs to 328 residues: D-cysteine desulfhydrase (328 aa).

N6-(pyridoxal phosphate)lysine is present on K51.

Belongs to the ACC deaminase/D-cysteine desulfhydrase family. In terms of assembly, homodimer. Pyridoxal 5'-phosphate serves as cofactor.

The enzyme catalyses D-cysteine + H2O = hydrogen sulfide + pyruvate + NH4(+) + H(+). Catalyzes the alpha,beta-elimination reaction of D-cysteine and of several D-cysteine derivatives. It could be a defense mechanism against D-cysteine. This Salmonella typhi protein is D-cysteine desulfhydrase.